Reading from the N-terminus, the 514-residue chain is Putative thymidine phosphorylase (514 aa).

This sequence belongs to the thymidine/pyrimidine-nucleoside phosphorylase family. Type 2 subfamily.

It carries out the reaction thymidine + phosphate = 2-deoxy-alpha-D-ribose 1-phosphate + thymine. This chain is Putative thymidine phosphorylase, found in Rhodopseudomonas palustris (strain ATCC BAA-98 / CGA009).